Consider the following 357-residue polypeptide: Hemolysin VllY (357 aa).

VOC domains are found at residues 12–132 and 162–313; these read GFEF…FVDR and EIDH…IFTQ. 3 residues coordinate Fe cation: His-165, His-243, and Glu-322.

Belongs to the 4HPPD family. Fe cation is required as a cofactor.

The protein is Hemolysin VllY (vllY) of Vibrio vulnificus (strain CMCP6).